The chain runs to 727 residues: FACT complex subunit Ssrp1 (727 aa).

2 disordered regions span residues 458–565 and 596–727; these read AEAR…AFML and ELKD…EGSD. 2 stretches are compositionally biased toward acidic residues: residues 464 to 479 and 487 to 508; these read EEEDDDGDDSDEESTD and NESDVAEEYDSNVEDDSDDDSD. Gly residues predominate over residues 510–519; the sequence is SGGGGDGGTD. Basic and acidic residues-rich tracts occupy residues 529-555, 596-620, and 675-703; these read KKNEKKEKTHKEKEKIKKPTKKKDTGK, ELKDKSKWEEAANKDKIRYQEEMRN, and DQEKVKEIPKKKNKSTAEDKDKNSKKSES. The segment at residues 556 to 622 is a DNA-binding region (HMG box); it reads PKRGTSAFML…RYQEEMRNYK (67 aa). The span at 704–727 shows a compositional bias: acidic residues; the sequence is EGGDSDDASNASEDDDEEEDEGSD.

Belongs to the SSRP1 family. In terms of assembly, component of the FACT complex, a stable heterodimer of dre4/spt16 and Ssrp.

It is found in the nucleus. The protein resides in the chromosome. It localises to the nucleolus. Component of the FACT complex, a general chromatin factor that acts to reorganize nucleosomes. The FACT complex is involved in multiple processes that require DNA as a template such as mRNA elongation, DNA replication and DNA repair. During transcription elongation the FACT complex acts as a histone chaperone that both destabilizes and restores nucleosomal structure. It facilitates the passage of RNA polymerase II and transcription by promoting the dissociation of one histone H2A-H2B dimer from the nucleosome, then subsequently promotes the reestablishment of the nucleosome following the passage of RNA polymerase II. Binds specifically to single-stranded DNA and RNA with highest affinity for nucleotides G and U. The FACT complex is required for expression of Hox genes. In Drosophila pseudoobscura pseudoobscura (Fruit fly), this protein is FACT complex subunit Ssrp1 (Ssrp).